We begin with the raw amino-acid sequence, 243 residues long: Triosephosphate isomerase (243 aa).

A substrate-binding site is contributed by 9 to 11 (NWK). His-96 functions as the Electrophile in the catalytic mechanism. Residue Glu-165 is the Proton acceptor of the active site. Substrate is bound by residues Gly-171, Ser-204, and 225 to 226 (GG).

The protein belongs to the triosephosphate isomerase family. Homodimer.

The protein resides in the cytoplasm. The catalysed reaction is D-glyceraldehyde 3-phosphate = dihydroxyacetone phosphate. The protein operates within carbohydrate biosynthesis; gluconeogenesis. It functions in the pathway carbohydrate degradation; glycolysis; D-glyceraldehyde 3-phosphate from glycerone phosphate: step 1/1. Involved in the gluconeogenesis. Catalyzes stereospecifically the conversion of dihydroxyacetone phosphate (DHAP) to D-glyceraldehyde-3-phosphate (G3P). This Parasynechococcus marenigrum (strain WH8102) protein is Triosephosphate isomerase.